Here is a 672-residue protein sequence, read N- to C-terminus: Probable copper-transporting P-type ATPase B (672 aa).

Basic and acidic residues predominate over residues 1–17 (MEHHSHQEHENHTSHGN). Residues 1 to 22 (MEHHSHQEHENHTSHGNHEHHH) are disordered. Transmembrane regions (helical) follow at residues 30 to 50 (FFIS…MGVK), 55 to 75 (ISFT…FFYG), 93 to 113 (GMMT…LYAF), 125 to 145 (TMDF…GHWI), 282 to 302 (GYLF…WMLI), and 313 to 333 (LVTV…PLVT). Catalysis depends on Asp-365, which acts as the 4-aspartylphosphate intermediate. Positions 563 and 567 each coordinate Mg(2+). The next 2 helical transmembrane spans lie at 621 to 643 (LWWG…ASIG) and 647 to 669 (SPAV…AFTL).

It belongs to the cation transport ATPase (P-type) (TC 3.A.3) family. Type IB subfamily.

The protein localises to the cell membrane. The catalysed reaction is Cu(+)(in) + ATP + H2O = Cu(+)(out) + ADP + phosphate + H(+). Its function is as follows. Involved in copper transport. This chain is Probable copper-transporting P-type ATPase B (copB), found in Staphylococcus aureus.